We begin with the raw amino-acid sequence, 428 residues long: Anaerobic glycerol-3-phosphate dehydrogenase subunit B (428 aa).

This sequence belongs to the anaerobic G-3-P dehydrogenase subunit B family. Composed of a catalytic GlpA/B dimer and of membrane bound GlpC. FMN serves as cofactor.

It carries out the reaction a quinone + sn-glycerol 3-phosphate = dihydroxyacetone phosphate + a quinol. Its pathway is polyol metabolism; glycerol degradation via glycerol kinase pathway; glycerone phosphate from sn-glycerol 3-phosphate (anaerobic route): step 1/1. Its function is as follows. Conversion of glycerol 3-phosphate to dihydroxyacetone. Uses fumarate or nitrate as electron acceptor. The polypeptide is Anaerobic glycerol-3-phosphate dehydrogenase subunit B (Pasteurella multocida (strain Pm70)).